Reading from the N-terminus, the 76-residue chain is MSQTLAAVEGSLGSIGYGLAAIGPGVGVGIIFGNGTQAMARQPEAAGLIRANQILGFAFCEALALIGLVMPFVYGY.

The next 2 helical transmembrane spans lie at 12 to 32 (LGSI…GIIF) and 54 to 74 (ILGF…PFVY).

The protein belongs to the ATPase C chain family. In terms of assembly, F-type ATPases have 2 components, F(1) - the catalytic core - and F(0) - the membrane proton channel. F(1) has five subunits: alpha(3), beta(3), gamma(1), delta(1), epsilon(1). F(0) has three main subunits: a(1), b(2) and c(10-14). The alpha and beta chains form an alternating ring which encloses part of the gamma chain. F(1) is attached to F(0) by a central stalk formed by the gamma and epsilon chains, while a peripheral stalk is formed by the delta and b chains.

Its subcellular location is the cell membrane. In terms of biological role, f(1)F(0) ATP synthase produces ATP from ADP in the presence of a proton or sodium gradient. F-type ATPases consist of two structural domains, F(1) containing the extramembraneous catalytic core and F(0) containing the membrane proton channel, linked together by a central stalk and a peripheral stalk. During catalysis, ATP synthesis in the catalytic domain of F(1) is coupled via a rotary mechanism of the central stalk subunits to proton translocation. Functionally, key component of the F(0) channel; it plays a direct role in translocation across the membrane. A homomeric c-ring of between 10-14 subunits forms the central stalk rotor element with the F(1) delta and epsilon subunits. This chain is ATP synthase subunit c, found in Streptomyces coelicolor (strain ATCC BAA-471 / A3(2) / M145).